We begin with the raw amino-acid sequence, 145 residues long: 3-dehydroquinate dehydratase (145 aa).

Y23 acts as the Proton acceptor in catalysis. Substrate contacts are provided by N74, H80, and D87. H100 (proton donor) is an active-site residue. Substrate contacts are provided by residues 101–102 and R111; that span reads IS.

The protein belongs to the type-II 3-dehydroquinase family. In terms of assembly, homododecamer.

It catalyses the reaction 3-dehydroquinate = 3-dehydroshikimate + H2O. It participates in metabolic intermediate biosynthesis; chorismate biosynthesis; chorismate from D-erythrose 4-phosphate and phosphoenolpyruvate: step 3/7. In terms of biological role, catalyzes a trans-dehydration via an enolate intermediate. This is 3-dehydroquinate dehydratase from Dictyoglomus turgidum (strain DSM 6724 / Z-1310).